Consider the following 485-residue polypeptide: Glutamate--tRNA ligase (485 aa).

Residues 12 to 22 (PSPTGYMHIGN) carry the 'HIGH' region motif. A 'KMSKS' region motif is present at residues 253–257 (KLSKR). Lys256 is a binding site for ATP.

Belongs to the class-I aminoacyl-tRNA synthetase family. Glutamate--tRNA ligase type 1 subfamily. As to quaternary structure, monomer.

Its subcellular location is the cytoplasm. The enzyme catalyses tRNA(Glu) + L-glutamate + ATP = L-glutamyl-tRNA(Glu) + AMP + diphosphate. In terms of biological role, catalyzes the attachment of glutamate to tRNA(Glu) in a two-step reaction: glutamate is first activated by ATP to form Glu-AMP and then transferred to the acceptor end of tRNA(Glu). This is Glutamate--tRNA ligase from Clostridium acetobutylicum (strain ATCC 824 / DSM 792 / JCM 1419 / IAM 19013 / LMG 5710 / NBRC 13948 / NRRL B-527 / VKM B-1787 / 2291 / W).